The sequence spans 275 residues: Chemotaxis protein methyltransferase 1 (275 aa).

The 275-residue stretch at 1–275 (MTAITISDQE…CNPGIIYKLK (275 aa)) folds into the CheR-type methyltransferase domain. S-adenosyl-L-methionine-binding positions include asparagine 76, threonine 78, arginine 82, glutamate 117, aspartate 145, 201–202 (NL), and 218–219 (RN).

It carries out the reaction L-glutamyl-[protein] + S-adenosyl-L-methionine = [protein]-L-glutamate 5-O-methyl ester + S-adenosyl-L-homocysteine. Its function is as follows. Methylation of the membrane-bound methyl-accepting chemotaxis proteins (MCP) to form gamma-glutamyl methyl ester residues in MCP. In Vibrio cholerae serotype O1 (strain ATCC 39315 / El Tor Inaba N16961), this protein is Chemotaxis protein methyltransferase 1 (cheR1).